The following is a 417-amino-acid chain: Serine hydroxymethyltransferase 2 (417 aa).

(6S)-5,6,7,8-tetrahydrofolate-binding positions include leucine 121 and 125-127 (GHL). Lysine 229 carries the N6-(pyridoxal phosphate)lysine modification. A (6S)-5,6,7,8-tetrahydrofolate-binding site is contributed by 354–356 (SPF).

It belongs to the SHMT family. Homodimer. It depends on pyridoxal 5'-phosphate as a cofactor.

The protein localises to the cytoplasm. The enzyme catalyses (6R)-5,10-methylene-5,6,7,8-tetrahydrofolate + glycine + H2O = (6S)-5,6,7,8-tetrahydrofolate + L-serine. Its pathway is one-carbon metabolism; tetrahydrofolate interconversion. It participates in amino-acid biosynthesis; glycine biosynthesis; glycine from L-serine: step 1/1. Functionally, catalyzes the reversible interconversion of serine and glycine with tetrahydrofolate (THF) serving as the one-carbon carrier. This reaction serves as the major source of one-carbon groups required for the biosynthesis of purines, thymidylate, methionine, and other important biomolecules. Also exhibits THF-independent aldolase activity toward beta-hydroxyamino acids, producing glycine and aldehydes, via a retro-aldol mechanism. This is Serine hydroxymethyltransferase 2 from Pseudomonas fluorescens (strain Pf0-1).